A 708-amino-acid polypeptide reads, in one-letter code: Vertnin (708 aa).

2 disordered regions span residues 473–499 (PWKG…FLPP) and 561–636 (APAL…PVAE). Residues 568–582 (GLREAKEKQEKEAGR) are compositionally biased toward basic and acidic residues.

The protein belongs to the vertnin family.

The polypeptide is Vertnin (VRTN) (Ailuropoda melanoleuca (Giant panda)).